A 123-amino-acid polypeptide reads, in one-letter code: Large ribosomal subunit protein bL20 (123 aa).

The protein belongs to the bacterial ribosomal protein bL20 family.

Its function is as follows. Binds directly to 23S ribosomal RNA and is necessary for the in vitro assembly process of the 50S ribosomal subunit. It is not involved in the protein synthesizing functions of that subunit. The chain is Large ribosomal subunit protein bL20 (rplT) from Chlamydia trachomatis serovar D (strain ATCC VR-885 / DSM 19411 / UW-3/Cx).